A 393-amino-acid chain; its full sequence is S-adenosylmethionine synthase 4 (393 aa).

Mg(2+) is bound at residue E9. H15 is an ATP binding site. A K(+)-binding site is contributed by E43. L-methionine is bound by residues E56 and Q99. Residues 167–169 (DGK), 235–238 (SGRF), D246, 252–253 (RK), A269, K273, and K277 contribute to the ATP site. D246 contributes to the L-methionine binding site. K277 is a binding site for L-methionine.

This sequence belongs to the AdoMet synthase family. In terms of assembly, homotetramer. It depends on Mn(2+) as a cofactor. Mg(2+) is required as a cofactor. Requires Co(2+) as cofactor. The cofactor is K(+). In terms of tissue distribution, detected in trichomes (at the protein level).

It is found in the cytoplasm. It carries out the reaction L-methionine + ATP + H2O = S-adenosyl-L-methionine + phosphate + diphosphate. It functions in the pathway amino-acid biosynthesis; S-adenosyl-L-methionine biosynthesis; S-adenosyl-L-methionine from L-methionine: step 1/1. In terms of biological role, catalyzes the formation of S-adenosylmethionine from methionine and ATP. The reaction comprises two steps that are both catalyzed by the same enzyme: formation of S-adenosylmethionine (AdoMet) and triphosphate, and subsequent hydrolysis of the triphosphate. This is S-adenosylmethionine synthase 4 (METK4) from Arabidopsis thaliana (Mouse-ear cress).